A 605-amino-acid chain; its full sequence is UvrABC system protein C (605 aa).

Residues 13 to 92 (SEPGVYLMKD…IKRYRPKYNV (80 aa)) enclose the GIY-YIG domain. Residues 205 to 240 (EKLMELLKEKMNESSMNFRFEEAAVYRDKIKSLEEM) form the UVR domain.

This sequence belongs to the UvrC family. As to quaternary structure, interacts with UvrB in an incision complex.

It is found in the cytoplasm. Functionally, the UvrABC repair system catalyzes the recognition and processing of DNA lesions. UvrC both incises the 5' and 3' sides of the lesion. The N-terminal half is responsible for the 3' incision and the C-terminal half is responsible for the 5' incision. This chain is UvrABC system protein C, found in Clostridioides difficile (strain 630) (Peptoclostridium difficile).